The sequence spans 270 residues: Meiotic recombination 1 protein (270 aa).

In terms of domain architecture, KH spans 191-225 (EIKLNKTQITFLIGAKGTRIESLREKSGASIKIIP).

Its function is as follows. Required for chromosome pairing and genetic recombination. MER1 may function to bring the axial elements of the synaptonemal complex corresponding to homologous chromosomes together by initiating recombination. MER1 might be responsible for regulating the MER2 gene and/or gene product. The sequence is that of Meiotic recombination 1 protein (MER1) from Saccharomyces cerevisiae (strain ATCC 204508 / S288c) (Baker's yeast).